The sequence spans 73 residues: Salivary thrombin inhibitor XC-42 (73 aa).

An N-terminal signal peptide occupies residues 1 to 23 (MKLQFLFIFIAFCVMLFAQIATA).

In terms of assembly, interacts with human F2 (thrombin). In terms of tissue distribution, salivary gland (at protein level).

The protein resides in the secreted. In terms of biological role, acts as a competitive inhibitor of host thrombin. The chain is Salivary thrombin inhibitor XC-42 from Xenopsylla cheopis (Oriental rat flea).